A 426-amino-acid chain; its full sequence is Glutamate-1-semialdehyde 2,1-aminomutase (426 aa).

Lys-265 carries the post-translational modification N6-(pyridoxal phosphate)lysine.

The protein belongs to the class-III pyridoxal-phosphate-dependent aminotransferase family. HemL subfamily. As to quaternary structure, homodimer. Requires pyridoxal 5'-phosphate as cofactor.

It is found in the cytoplasm. The catalysed reaction is (S)-4-amino-5-oxopentanoate = 5-aminolevulinate. It functions in the pathway porphyrin-containing compound metabolism; protoporphyrin-IX biosynthesis; 5-aminolevulinate from L-glutamyl-tRNA(Glu): step 2/2. This is Glutamate-1-semialdehyde 2,1-aminomutase from Escherichia coli (strain K12 / DH10B).